Consider the following 277-residue polypeptide: Protein RKD3 (277 aa).

In terms of domain architecture, RWP-RK spans 142 to 226; sequence KRIIMKRRYR…LGNTKGRTPK (85 aa). Residues 201-246 adopt a coiled-coil conformation; the sequence is RKLTSLNALIANLKDLLGNTKGRTPKSKLRNALELLEMEKKMIEEV.

It localises to the nucleus. Functionally, putative transcription factor. In Arabidopsis thaliana (Mouse-ear cress), this protein is Protein RKD3 (RKD3).